The following is a 135-amino-acid chain: ATP synthase epsilon chain (135 aa).

It belongs to the ATPase epsilon chain family. In terms of assembly, F-type ATPases have 2 components, CF(1) - the catalytic core - and CF(0) - the membrane proton channel. CF(1) has five subunits: alpha(3), beta(3), gamma(1), delta(1), epsilon(1). CF(0) has three main subunits: a, b and c.

It is found in the cell inner membrane. Functionally, produces ATP from ADP in the presence of a proton gradient across the membrane. In Rhizobium johnstonii (strain DSM 114642 / LMG 32736 / 3841) (Rhizobium leguminosarum bv. viciae), this protein is ATP synthase epsilon chain.